We begin with the raw amino-acid sequence, 231 residues long: 7-cyano-7-deazaguanine synthase (231 aa).

Phe8 to Leu18 contacts ATP. Zn(2+) is bound by residues Cys188, Cys197, Cys200, and Cys203.

The protein belongs to the QueC family. It depends on Zn(2+) as a cofactor.

It catalyses the reaction 7-carboxy-7-deazaguanine + NH4(+) + ATP = 7-cyano-7-deazaguanine + ADP + phosphate + H2O + H(+). It functions in the pathway purine metabolism; 7-cyano-7-deazaguanine biosynthesis. Its function is as follows. Catalyzes the ATP-dependent conversion of 7-carboxy-7-deazaguanine (CDG) to 7-cyano-7-deazaguanine (preQ(0)). The protein is 7-cyano-7-deazaguanine synthase of Escherichia coli (strain ATCC 8739 / DSM 1576 / NBRC 3972 / NCIMB 8545 / WDCM 00012 / Crooks).